A 189-amino-acid chain; its full sequence is Probable nicotinate-nucleotide adenylyltransferase (189 aa).

It belongs to the NadD family.

It carries out the reaction nicotinate beta-D-ribonucleotide + ATP + H(+) = deamido-NAD(+) + diphosphate. The protein operates within cofactor biosynthesis; NAD(+) biosynthesis; deamido-NAD(+) from nicotinate D-ribonucleotide: step 1/1. Functionally, catalyzes the reversible adenylation of nicotinate mononucleotide (NaMN) to nicotinic acid adenine dinucleotide (NaAD). The sequence is that of Probable nicotinate-nucleotide adenylyltransferase from Bacillus pumilus (strain SAFR-032).